The primary structure comprises 447 residues: Na(+)-translocating NADH-quinone reductase subunit A (447 aa).

It belongs to the NqrA family. As to quaternary structure, composed of six subunits; NqrA, NqrB, NqrC, NqrD, NqrE and NqrF.

It catalyses the reaction a ubiquinone + n Na(+)(in) + NADH + H(+) = a ubiquinol + n Na(+)(out) + NAD(+). In terms of biological role, NQR complex catalyzes the reduction of ubiquinone-1 to ubiquinol by two successive reactions, coupled with the transport of Na(+) ions from the cytoplasm to the periplasm. NqrA to NqrE are probably involved in the second step, the conversion of ubisemiquinone to ubiquinol. The sequence is that of Na(+)-translocating NADH-quinone reductase subunit A from Haemophilus influenzae (strain 86-028NP).